We begin with the raw amino-acid sequence, 723 residues long: Cyclin-T2 (723 aa).

An interaction with MDFIC and MDFI region spans residues 1-298 (MASGRGASSR…SVTGVPANPS (298 aa)). The region spanning 12–147 (FFTREQLENT…IMLQTLGFEI (136 aa)) is the Cyclin N-terminal domain. The interaction with POLR2A stretch occupies residues 250–298 (RLKRIRNWRAMAKKPKVDGQVSETPLLGSSLVQNSILVDSVTGVPANPS). 2 stretches are compositionally biased toward polar residues: residues 297–307 (PSFQKPSTSTF) and 314–325 (NSGSTSVQDSRA). Disordered regions lie at residues 297-325 (PSFQ…DSRA), 340-364 (SYSL…VYTQ), 385-428 (ALHS…GMLP), and 458-645 (AEQQ…SSVK). A compositionally biased stretch (basic and acidic residues) spans 395 to 409 (DKVADHSSAKQEYTH). K404 participates in a covalent cross-link: Glycyl lysine isopeptide (Lys-Gly) (interchain with G-Cter in SUMO2). Position 477 is a phosphoserine (S477). Basic and acidic residues-rich tracts occupy residues 489 to 503 (DRPE…ERSG), 517 to 543 (GPSK…EGSG), and 552 to 565 (ISRD…EHPA). Over residues 566-576 (NRHHSSHKYLH) the composition is skewed to basic residues. Phosphoserine is present on S596. Positions 631 to 645 (SSKSAGSSSSSSSVK) are enriched in low complexity.

It belongs to the cyclin family. Cyclin C subfamily. Interacts with CDK9 to form P-TEFb. Interacts with POLR2A (via the C-terminal domain (CTD)); mediates transcriptional activity. Interacts with HEXIM1; mediates formation of a tripartite complex with KPNA2. Interacts with HEXIM2. Interacts with PKN1; enhances MYOD1-dependent transcription. P-TEFB complex interacts with RB1; promotes phosphorylation of RB1. P-TEFB complex interacts with MYOD1; promotes the transcriptional activity of MYOD1 through its CDK9-mediated phosphorylation. Interacts with MDFI and MDFIC. As to expression, highly expressed in all phases of skeletal muscle differentiation, particularly in later stages. Highly expressed in skeletal muscle. Significantly expressed in heart, brain, kidney, liver, testis, and pancreas.

It localises to the cytoplasm. The protein resides in the perinuclear region. Its subcellular location is the nucleus. Its function is as follows. Regulatory subunit of the cyclin-dependent kinase pair (CDK9/cyclin T) complex, also called positive transcription elongation factor B (P-TEFB), which is proposed to facilitate the transition from abortive to production elongation by phosphorylating the CTD (carboxy-terminal domain) of the large subunit of RNA polymerase II (RNAP II). The activity of this complex is regulated by binding with 7SK snRNA. Plays a role during muscle differentiation; P-TEFB complex interacts with MYOD1; this tripartite complex promotes the transcriptional activity of MYOD1 through its CDK9-mediated phosphorylation and binds the chromatin of promoters and enhancers of muscle-specific genes; this event correlates with hyperphosphorylation of the CTD domain of RNA pol II. In addition, enhances MYOD1-dependent transcription through interaction with PKN1. Involved in early embryo development. This chain is Cyclin-T2, found in Mus musculus (Mouse).